A 172-amino-acid polypeptide reads, in one-letter code: Large ribosomal subunit protein uL10 (172 aa).

The protein belongs to the universal ribosomal protein uL10 family. In terms of assembly, part of the ribosomal stalk of the 50S ribosomal subunit. The N-terminus interacts with L11 and the large rRNA to form the base of the stalk. The C-terminus forms an elongated spine to which L12 dimers bind in a sequential fashion forming a multimeric L10(L12)X complex.

In terms of biological role, forms part of the ribosomal stalk, playing a central role in the interaction of the ribosome with GTP-bound translation factors. The protein is Large ribosomal subunit protein uL10 of Rhizobium rhizogenes (strain K84 / ATCC BAA-868) (Agrobacterium radiobacter).